The chain runs to 153 residues: Transcriptional repressor NrdR (153 aa).

The segment at 3–34 (CPFCNNINTQVKDSRAIEDDILIRRRRICLVC) is a zinc-finger region. Residues 49–139 (FMVIKKNGET…VYMNFKNIND (91 aa)) form the ATP-cone domain.

Belongs to the NrdR family. It depends on Zn(2+) as a cofactor.

Its function is as follows. Negatively regulates transcription of bacterial ribonucleotide reductase nrd genes and operons by binding to NrdR-boxes. The sequence is that of Transcriptional repressor NrdR from Ehrlichia canis (strain Jake).